The primary structure comprises 291 residues: Small ribosomal subunit protein uS2 (291 aa).

It belongs to the universal ribosomal protein uS2 family.

This Lawsonia intracellularis (strain PHE/MN1-00) protein is Small ribosomal subunit protein uS2.